The chain runs to 211 residues: MNDQKTTNTGLLTSTLKTKPKHNLKPSSEAIKKAVSKKEGHYKNKRFQKHNFNNKSEFEERIVKLKRISKTTKGGRNMRFSVLVVVGNKKGKVGYGIAKALEVPLAIKKAIKKAHNSIHTVEIHKGSIYHEVIGRKGASKVLLKPAPLGTGIIAGGAIRAIVELAGFSDIYTKNLGRNTPINMIHATMDGILKQLSPKKVALLRNKPISDL.

The S5 DRBM domain occupies phenylalanine 58–valine 121.

This sequence belongs to the universal ribosomal protein uS5 family. Part of the 30S ribosomal subunit. Contacts proteins S4 and S8.

With S4 and S12 plays an important role in translational accuracy. Functionally, located at the back of the 30S subunit body where it stabilizes the conformation of the head with respect to the body. This chain is Small ribosomal subunit protein uS5, found in Mycoplasma genitalium (strain ATCC 33530 / DSM 19775 / NCTC 10195 / G37) (Mycoplasmoides genitalium).